We begin with the raw amino-acid sequence, 250 residues long: Cell division protein ZapD (250 aa).

Belongs to the ZapD family. As to quaternary structure, interacts with FtsZ.

The protein resides in the cytoplasm. Its function is as follows. Cell division factor that enhances FtsZ-ring assembly. Directly interacts with FtsZ and promotes bundling of FtsZ protofilaments, with a reduction in FtsZ GTPase activity. The protein is Cell division protein ZapD of Yersinia enterocolitica serotype O:8 / biotype 1B (strain NCTC 13174 / 8081).